The sequence spans 496 residues: NADH-ubiquinone oxidoreductase 51 kDa subunit, mitochondrial (496 aa).

The N-terminal 30 residues, 1-30, are a transit peptide targeting the mitochondrion; it reads MISRAAAPSSSIASLSSRSLRAQAPAARSF. 98 to 107 contributes to the NAD(+) binding site; sequence GRGGAGFPSG. 214–261 contributes to the FMN binding site; it reads GMGAYVCGEETSLIESIEGKAGKPRLKPPFPAAVGLFGCPSTVTNVET. Cys393, Cys396, Cys399, and Cys439 together coordinate [4Fe-4S] cluster.

The protein belongs to the complex I 51 kDa subunit family. As to quaternary structure, complex I is composed of about 40 different subunits. This is a component of the flavoprotein-sulfur (FP) fragment of the enzyme. FMN serves as cofactor. The cofactor is [4Fe-4S] cluster.

The protein localises to the mitochondrion inner membrane. It carries out the reaction a ubiquinone + NADH + 5 H(+)(in) = a ubiquinol + NAD(+) + 4 H(+)(out). Functionally, core subunit of the mitochondrial membrane respiratory chain NADH dehydrogenase (Complex I) that is believed to belong to the minimal assembly required for catalysis. Complex I functions in the transfer of electrons from NADH to the respiratory chain. The immediate electron acceptor for the enzyme is believed to be ubiquinone. The protein is NADH-ubiquinone oxidoreductase 51 kDa subunit, mitochondrial (NUO51) of Aspergillus niger.